The sequence spans 360 residues: GTPase Obg (360 aa).

Positions 1 to 156 constitute an Obg domain; sequence MFVDSVEIII…KCVRLELKLI (156 aa). The OBG-type G domain maps to 157-360; it reads ADIGLVGFPN…LKFVLLEALP (204 aa). Residues 163–170, 188–192, 210–213, 279–282, and 341–343 contribute to the GTP site; these read GFPNAGKS, FTTLV, DIPG, NKCD, and SAV. The Mg(2+) site is built by Ser170 and Thr190.

Belongs to the TRAFAC class OBG-HflX-like GTPase superfamily. OBG GTPase family. As to quaternary structure, monomer. The cofactor is Mg(2+).

Its subcellular location is the cytoplasm. An essential GTPase which binds GTP, GDP and possibly (p)ppGpp with moderate affinity, with high nucleotide exchange rates and a fairly low GTP hydrolysis rate. Plays a role in control of the cell cycle, stress response, ribosome biogenesis and in those bacteria that undergo differentiation, in morphogenesis control. The sequence is that of GTPase Obg from Helicobacter pylori (strain HPAG1).